We begin with the raw amino-acid sequence, 337 residues long: Glucokinase (337 aa).

11–16 (ADIGGT) serves as a coordination point for ATP.

Belongs to the bacterial glucokinase family.

The protein resides in the cytoplasm. It carries out the reaction D-glucose + ATP = D-glucose 6-phosphate + ADP + H(+). This chain is Glucokinase, found in Xylella fastidiosa (strain M12).